A 96-amino-acid chain; its full sequence is Exodeoxyribonuclease 7 small subunit (96 aa).

The span at 61 to 79 (ALTKDESQKTNKTGFRTES) shows a compositional bias: basic and acidic residues. The segment at 61–96 (ALTKDESQKTNKTGFRTESKSTSQTSSDSVLEEDLF) is disordered. A compositionally biased stretch (low complexity) spans 80-89 (KSTSQTSSDS).

It belongs to the XseB family. As to quaternary structure, heterooligomer composed of large and small subunits.

The protein resides in the cytoplasm. The catalysed reaction is Exonucleolytic cleavage in either 5'- to 3'- or 3'- to 5'-direction to yield nucleoside 5'-phosphates.. Functionally, bidirectionally degrades single-stranded DNA into large acid-insoluble oligonucleotides, which are then degraded further into small acid-soluble oligonucleotides. The protein is Exodeoxyribonuclease 7 small subunit of Leptospira borgpetersenii serovar Hardjo-bovis (strain JB197).